Here is a 301-residue protein sequence, read N- to C-terminus: Acetylglutamate kinase (301 aa).

Residues 68 to 69 (GG), Arg-90, and Asn-195 each bind substrate.

The protein belongs to the acetylglutamate kinase family. ArgB subfamily.

The protein localises to the cytoplasm. The enzyme catalyses N-acetyl-L-glutamate + ATP = N-acetyl-L-glutamyl 5-phosphate + ADP. Its pathway is amino-acid biosynthesis; L-arginine biosynthesis; N(2)-acetyl-L-ornithine from L-glutamate: step 2/4. In terms of biological role, catalyzes the ATP-dependent phosphorylation of N-acetyl-L-glutamate. The chain is Acetylglutamate kinase from Pseudomonas aeruginosa (strain LESB58).